A 245-amino-acid polypeptide reads, in one-letter code: Phycocyanobilin:ferredoxin oxidoreductase (245 aa).

Belongs to the HY2 family.

The catalysed reaction is (2R,3Z)-phycocyanobilin + 4 oxidized [2Fe-2S]-[ferredoxin] = biliverdin IXalpha + 4 reduced [2Fe-2S]-[ferredoxin] + 4 H(+). Functionally, catalyzes the four-electron reduction of biliverdin IX-alpha (2-electron reduction at both the A and D rings); the reaction proceeds via an isolatable 2-electron intermediate, 181,182-dihydrobiliverdin. Upon overexpression in E.coli with PCB:ferredoxin oxidoreductase, CpeS and either CpcB or PecB permits synthesis of phycocyanin-coupled CpcB or PecB. The chain is Phycocyanobilin:ferredoxin oxidoreductase (pcyA) from Nostoc sp. (strain PCC 7120 / SAG 25.82 / UTEX 2576).